Here is a 284-residue protein sequence, read N- to C-terminus: Undecaprenyl-diphosphatase (284 aa).

The next 8 membrane-spanning stretches (helical) occupy residues 7-27 (IILGVIEGITEWLPISSTGHL), 44-64 (EMFDVVIQLGAILSVVVLYFH), 90-110 (LWLKVLIAALPAAIIGLPLND), 116-136 (FYHFVPVAFMLIIYGVAFIVI), 167-187 (VLSLLPGTSRSGATIVGALLV), 197-217 (FTFFLGIPVMFGASFIKILHF), 229-249 (FGVLLVACIVAFGVSMVAIKF), and 259-279 (FTFFGKYRIVLGIILLIYAMF).

Belongs to the UppP family.

The protein localises to the cell membrane. The catalysed reaction is di-trans,octa-cis-undecaprenyl diphosphate + H2O = di-trans,octa-cis-undecaprenyl phosphate + phosphate + H(+). Catalyzes the dephosphorylation of undecaprenyl diphosphate (UPP). Confers resistance to bacitracin. The protein is Undecaprenyl-diphosphatase of Lactococcus lactis subsp. lactis (strain IL1403) (Streptococcus lactis).